The following is a 234-amino-acid chain: Small ribosomal subunit protein uS2c (234 aa).

This sequence belongs to the universal ribosomal protein uS2 family.

Its subcellular location is the plastid. The protein resides in the chloroplast. The sequence is that of Small ribosomal subunit protein uS2c (rps2) from Pinus thunbergii (Japanese black pine).